The sequence spans 209 residues: Small ribosomal subunit protein uS4 (209 aa).

Residues 23 to 46 (SRNPLLKKPHPPGQHGMQRKKKSD) form a disordered region. The 64-residue stretch at 93–156 (CRLDNMVYRM…RKLQSVQESL (64 aa)) folds into the S4 RNA-binding domain.

Belongs to the universal ribosomal protein uS4 family. Part of the 30S ribosomal subunit. Contacts protein S5. The interaction surface between S4 and S5 is involved in control of translational fidelity.

One of the primary rRNA binding proteins, it binds directly to 16S rRNA where it nucleates assembly of the body of the 30S subunit. Functionally, with S5 and S12 plays an important role in translational accuracy. The chain is Small ribosomal subunit protein uS4 from Chlamydia caviae (strain ATCC VR-813 / DSM 19441 / 03DC25 / GPIC) (Chlamydophila caviae).